Reading from the N-terminus, the 329-residue chain is Cytosolic arginine sensor for mTORC1 subunit 2 (329 aa).

ACT domains follow at residues A72 to L139 and E262 to Q322.

It belongs to the GATS family. In terms of assembly, may form homodimers and heterodimers.

It is found in the cytoplasm. It localises to the cytosol. In terms of biological role, functions as a negative regulator of the TORC1 signaling pathway. The chain is Cytosolic arginine sensor for mTORC1 subunit 2 from Xenopus laevis (African clawed frog).